Consider the following 266-residue polypeptide: Thymidylate synthase (266 aa).

DUMP contacts are provided by residues arginine 21 and 127 to 128 (RR). Cysteine 147 (nucleophile) is an active-site residue. Residues 168–171 (RSAD), asparagine 179, and 209–211 (HIY) each bind dUMP. Residue aspartate 171 coordinates (6R)-5,10-methylene-5,6,7,8-tetrahydrofolate. Residue alanine 265 coordinates (6R)-5,10-methylene-5,6,7,8-tetrahydrofolate.

The protein belongs to the thymidylate synthase family. Bacterial-type ThyA subfamily. In terms of assembly, homodimer.

The protein localises to the cytoplasm. It carries out the reaction dUMP + (6R)-5,10-methylene-5,6,7,8-tetrahydrofolate = 7,8-dihydrofolate + dTMP. The protein operates within pyrimidine metabolism; dTTP biosynthesis. Catalyzes the reductive methylation of 2'-deoxyuridine-5'-monophosphate (dUMP) to 2'-deoxythymidine-5'-monophosphate (dTMP) while utilizing 5,10-methylenetetrahydrofolate (mTHF) as the methyl donor and reductant in the reaction, yielding dihydrofolate (DHF) as a by-product. This enzymatic reaction provides an intracellular de novo source of dTMP, an essential precursor for DNA biosynthesis. The protein is Thymidylate synthase of Brachyspira hyodysenteriae (strain ATCC 49526 / WA1).